We begin with the raw amino-acid sequence, 336 residues long: MAVATAAAVLAALGGALWLAARRFVGPRVQRLRRGGDPGLMHGKTVLITGANSGLGRATAAELLRLGARVIMGCRDRARAEEAAGQLRRELRQAAECGPEPGVSGVGELIVRELDLASLRSVRAFCQEMLQEEPRLDVLINNAGIFQCPYMKTEDGFEMQFGVNHLGHFLLTNLLLGLLKSSAPSRIVVVSSKLYKYGDINFDDLNSEQSYNKSFCYSRSKLANILFTRELARRLEGTNVTVNVLHPGIVRTNLGRHIHIPLLVKPLFNLVSWAFFKTPVEGAQTSIYLASSPEVEGVSGRYFGDCKEEELLPKAMDESVARKLWDISEVMVGLLK.

The residue at position 5 (Thr-5) is a Phosphothreonine. Position 50 to 56 (50 to 56) interacts with NADP(+); the sequence is GANSGLG. Ser-192 serves as a coordination point for substrate. Tyr-217 acts as the Proton acceptor in catalysis.

The protein belongs to the short-chain dehydrogenases/reductases (SDR) family. Widely expressed.

The catalysed reaction is all-trans-retinol + NADP(+) = all-trans-retinal + NADPH + H(+). It catalyses the reaction 9-cis-retinol + NADP(+) = 9-cis-retinal + NADPH + H(+). The enzyme catalyses 11-cis-retinol + NADP(+) = 11-cis-retinal + NADPH + H(+). Its pathway is cofactor metabolism; retinol metabolism. Retinol dehydrogenase with a clear preference for NADP. Displays high activity towards 9-cis, 11-cis and all-trans-retinol. Shows a very weak activity towards 13-cis-retinol. Has no activity towards steroid. The protein is Retinol dehydrogenase 14 (RDH14) of Homo sapiens (Human).